Reading from the N-terminus, the 200-residue chain is uncharacterized protein (200 aa).

This is an uncharacterized protein from Bacillus subtilis (strain 168).